The chain runs to 92 residues: UPF0223 protein EF_2462 (92 aa).

This sequence belongs to the UPF0223 family.

The protein is UPF0223 protein EF_2462 of Enterococcus faecalis (strain ATCC 700802 / V583).